The sequence spans 91 residues: Small ribosomal subunit protein uS15 (91 aa).

The protein belongs to the universal ribosomal protein uS15 family. Part of the 30S ribosomal subunit. Forms a bridge to the 50S subunit in the 70S ribosome, contacting the 23S rRNA.

In terms of biological role, one of the primary rRNA binding proteins, it binds directly to 16S rRNA where it helps nucleate assembly of the platform of the 30S subunit by binding and bridging several RNA helices of the 16S rRNA. Its function is as follows. Forms an intersubunit bridge (bridge B4) with the 23S rRNA of the 50S subunit in the ribosome. The protein is Small ribosomal subunit protein uS15 of Deinococcus radiodurans (strain ATCC 13939 / DSM 20539 / JCM 16871 / CCUG 27074 / LMG 4051 / NBRC 15346 / NCIMB 9279 / VKM B-1422 / R1).